A 281-amino-acid chain; its full sequence is uncharacterized protein (281 aa).

The helical transmembrane segment at 5–27 (AYVTVIYGNNIYLTGALVLGYTL) threads the bilayer.

It localises to the membrane. This is an uncharacterized protein from Acanthamoeba polyphaga mimivirus (APMV).